The chain runs to 31 residues: Photosystem II reaction center protein T (31 aa).

Residues Ser-3 to Phe-23 form a helical membrane-spanning segment.

This sequence belongs to the PsbT family. PSII is composed of 1 copy each of membrane proteins PsbA, PsbB, PsbC, PsbD, PsbE, PsbF, PsbH, PsbI, PsbJ, PsbK, PsbL, PsbM, PsbT, PsbX, PsbY, PsbZ, Psb30/Ycf12, peripheral proteins PsbO, CyanoQ (PsbQ), PsbU, PsbV and a large number of cofactors. It forms dimeric complexes.

It localises to the cellular thylakoid membrane. Found at the monomer-monomer interface of the photosystem II (PS II) dimer, plays a role in assembly and dimerization of PSII. PSII is a light-driven water plastoquinone oxidoreductase, using light energy to abstract electrons from H(2)O, generating a proton gradient subsequently used for ATP formation. This chain is Photosystem II reaction center protein T, found in Picosynechococcus sp. (strain ATCC 27264 / PCC 7002 / PR-6) (Agmenellum quadruplicatum).